The following is a 110-amino-acid chain: Large ribosomal subunit protein uL22 (110 aa).

A compositionally biased stretch (basic residues) spans A84–T95. The segment at A84–A110 is disordered.

Belongs to the universal ribosomal protein uL22 family. Part of the 50S ribosomal subunit.

Its function is as follows. This protein binds specifically to 23S rRNA; its binding is stimulated by other ribosomal proteins, e.g. L4, L17, and L20. It is important during the early stages of 50S assembly. It makes multiple contacts with different domains of the 23S rRNA in the assembled 50S subunit and ribosome. In terms of biological role, the globular domain of the protein is located near the polypeptide exit tunnel on the outside of the subunit, while an extended beta-hairpin is found that lines the wall of the exit tunnel in the center of the 70S ribosome. The protein is Large ribosomal subunit protein uL22 of Campylobacter concisus (strain 13826).